The following is a 384-amino-acid chain: MGNNTSRRSQSQKFKNIPSISAGSFSTMPVQHRGRRRRSKSIVGRAAQNAVLRSKEKTWIVPLILLTLLVGWYFVNPNGYIKYGIFLSYPIPGTNPAQYGKGRLDIAFCLFYALFFTFCREFIMQEIIARIGRHFNIRAPAKLRRFEEQAYTCLYFTVMGSWGLYVMKQTPMWFFNTDAFWEEYPHFYHVGSFKAFYLIEAAYWIQQALVLILQLEKPRKDFKELVVHHIITLLLIGLSYYFHFTWIGLAVFITMDTSDIWLALSKCLNYVNTVIVYPIFVIFVFVWIYMRHYLNFKIMWAVWGTMRTINSFDLDWAAEQYKCWISRDVTLILLTALQLVNIYWLILILRIGYRAFTTNDTHDERSEDEDEEVSDEKSSAKKND.

The Cytoplasmic segment spans residues 1–58 (MGNNTSRRSQSQKFKNIPSISAGSFSTMPVQHRGRRRRSKSIVGRAAQNAVLRSKEKT). Residues 19-29 (SISAGSFSTMP) are compositionally biased toward polar residues. The tract at residues 19-42 (SISAGSFSTMPVQHRGRRRRSKSI) is disordered. S41 is subject to Phosphoserine. Residues 59–79 (WIVPLILLTLLVGWYFVNPNG) form a helical membrane-spanning segment. The Lumenal portion of the chain corresponds to 80-103 (YIKYGIFLSYPIPGTNPAQYGKGR). Residues 104–124 (LDIAFCLFYALFFTFCREFIM) traverse the membrane as a helical segment. The Cytoplasmic segment spans residues 125 to 154 (QEIIARIGRHFNIRAPAKLRRFEEQAYTCL). The 217-residue stretch at 141–357 (AKLRRFEEQA…ILRIGYRAFT (217 aa)) folds into the TLC domain. The chain crosses the membrane as a helical span at residues 155 to 175 (YFTVMGSWGLYVMKQTPMWFF). Topologically, residues 176–194 (NTDAFWEEYPHFYHVGSFK) are lumenal. Residues 195-215 (AFYLIEAAYWIQQALVLILQL) form a helical membrane-spanning segment. Topologically, residues 216–232 (EKPRKDFKELVVHHIIT) are cytoplasmic. Residues 233 to 253 (LLLIGLSYYFHFTWIGLAVFI) traverse the membrane as a helical segment. The Lumenal portion of the chain corresponds to 254–269 (TMDTSDIWLALSKCLN). The helical transmembrane segment at 270 to 290 (YVNTVIVYPIFVIFVFVWIYM) threads the bilayer. The Cytoplasmic portion of the chain corresponds to 291-328 (RHYLNFKIMWAVWGTMRTINSFDLDWAAEQYKCWISRD). The helical transmembrane segment at 329 to 349 (VTLILLTALQLVNIYWLILIL) threads the bilayer. The Lumenal segment spans residues 350–384 (RIGYRAFTTNDTHDERSEDEDEEVSDEKSSAKKND). N-linked (GlcNAc...) asparagine glycosylation occurs at N359. A Phosphothreonine modification is found at T361. The segment at 362 to 384 (HDERSEDEDEEVSDEKSSAKKND) is disordered. The residue at position 366 (S366) is a Phosphoserine. Over residues 375–384 (DEKSSAKKND) the composition is skewed to basic and acidic residues.

This sequence belongs to the sphingosine N-acyltransferase family.

Its subcellular location is the endoplasmic reticulum membrane. The catalysed reaction is a fatty acyl-CoA + sphing-4-enine = an N-acylsphing-4-enine + CoA + H(+). Component of the ceramide synthase complex required for C26-CoA-dependent ceramide synthesis. Facilitates ER-to-Golgi transport of GPI-anchored proteins. Has a role in meiosis. The polypeptide is Sphingosine N-acyltransferase lac1 (lac1) (Schizosaccharomyces pombe (strain 972 / ATCC 24843) (Fission yeast)).